A 137-amino-acid polypeptide reads, in one-letter code: Nucleoside diphosphate kinase (137 aa).

ATP-binding residues include Lys-9, Phe-57, Arg-85, Thr-91, Arg-102, and Asn-112. The active-site Pros-phosphohistidine intermediate is the His-115.

Belongs to the NDK family. In terms of assembly, homotetramer. Requires Mg(2+) as cofactor.

It localises to the cytoplasm. The catalysed reaction is a 2'-deoxyribonucleoside 5'-diphosphate + ATP = a 2'-deoxyribonucleoside 5'-triphosphate + ADP. The enzyme catalyses a ribonucleoside 5'-diphosphate + ATP = a ribonucleoside 5'-triphosphate + ADP. Major role in the synthesis of nucleoside triphosphates other than ATP. The ATP gamma phosphate is transferred to the NDP beta phosphate via a ping-pong mechanism, using a phosphorylated active-site intermediate. This chain is Nucleoside diphosphate kinase, found in Sulfurimonas denitrificans (strain ATCC 33889 / DSM 1251) (Thiomicrospira denitrificans (strain ATCC 33889 / DSM 1251)).